A 477-amino-acid chain; its full sequence is tRNA(Ile)-lysidine synthase (477 aa).

36–41 is a binding site for ATP; it reads SGGADS.

This sequence belongs to the tRNA(Ile)-lysidine synthase family.

Its subcellular location is the cytoplasm. The enzyme catalyses cytidine(34) in tRNA(Ile2) + L-lysine + ATP = lysidine(34) in tRNA(Ile2) + AMP + diphosphate + H(+). Its function is as follows. Ligates lysine onto the cytidine present at position 34 of the AUA codon-specific tRNA(Ile) that contains the anticodon CAU, in an ATP-dependent manner. Cytidine is converted to lysidine, thus changing the amino acid specificity of the tRNA from methionine to isoleucine. In Treponema pallidum (strain Nichols), this protein is tRNA(Ile)-lysidine synthase.